The primary structure comprises 316 residues: Protoheme IX farnesyltransferase (316 aa).

9 helical membrane passes run 32–52, 53–73, 93–113, 116–136, 152–172, 180–200, 221–241, 252–271, and 289–309; these read VMSLVVFTAFAGLVLAPGHIH, PVLGTIAILCIAVGAGASGAL, IPAGRIAPSEALAFGLVLSGF, VILGLAVNWLSAGILAFTIFF, NIVIGGAAGAFPPMIGWACVT, TVLFLIIFLWTPAHFWALALF, VTKHQIVAYAVLTAVCAVLPS, LVAAALGAIFIYCSIAVWRM, and IFYLFAVFSALMIDRLAPVLV.

This sequence belongs to the UbiA prenyltransferase family. Protoheme IX farnesyltransferase subfamily.

Its subcellular location is the cell inner membrane. The enzyme catalyses heme b + (2E,6E)-farnesyl diphosphate + H2O = Fe(II)-heme o + diphosphate. It functions in the pathway porphyrin-containing compound metabolism; heme O biosynthesis; heme O from protoheme: step 1/1. Its function is as follows. Converts heme B (protoheme IX) to heme O by substitution of the vinyl group on carbon 2 of heme B porphyrin ring with a hydroxyethyl farnesyl side group. The protein is Protoheme IX farnesyltransferase of Rhizobium johnstonii (strain DSM 114642 / LMG 32736 / 3841) (Rhizobium leguminosarum bv. viciae).